Consider the following 222-residue polypeptide: Large ribosomal subunit protein uL4 (222 aa).

The protein belongs to the universal ribosomal protein uL4 family. Part of the 50S ribosomal subunit.

One of the primary rRNA binding proteins, this protein initially binds near the 5'-end of the 23S rRNA. It is important during the early stages of 50S assembly. It makes multiple contacts with different domains of the 23S rRNA in the assembled 50S subunit and ribosome. Functionally, forms part of the polypeptide exit tunnel. The chain is Large ribosomal subunit protein uL4 from Chlamydia trachomatis serovar L2 (strain ATCC VR-902B / DSM 19102 / 434/Bu).